The chain runs to 209 residues: Lipopolysaccharide export system protein LptC (209 aa).

The helical transmembrane segment at 7–26 threads the bilayer; sequence NIRWNVILGVIALCALAWFY.

The protein belongs to the LptC family. Component of the lipopolysaccharide transport and assembly complex. Interacts with LptA and the LptBFG transporter complex.

It localises to the cell inner membrane. Functionally, involved in the assembly of lipopolysaccharide (LPS). Required for the translocation of LPS from the inner membrane to the outer membrane. Facilitates the transfer of LPS from the inner membrane to the periplasmic protein LptA. Could be a docking site for LptA. This chain is Lipopolysaccharide export system protein LptC, found in Haemophilus influenzae (strain ATCC 51907 / DSM 11121 / KW20 / Rd).